A 311-amino-acid polypeptide reads, in one-letter code: Ribosomal RNA small subunit methyltransferase H (311 aa).

S-adenosyl-L-methionine contacts are provided by residues glycine 39 to histidine 41, aspartate 59, phenylalanine 81, aspartate 102, and histidine 109.

It belongs to the methyltransferase superfamily. RsmH family.

The protein localises to the cytoplasm. The catalysed reaction is cytidine(1402) in 16S rRNA + S-adenosyl-L-methionine = N(4)-methylcytidine(1402) in 16S rRNA + S-adenosyl-L-homocysteine + H(+). Its function is as follows. Specifically methylates the N4 position of cytidine in position 1402 (C1402) of 16S rRNA. This is Ribosomal RNA small subunit methyltransferase H from Porphyromonas gingivalis (strain ATCC BAA-308 / W83).